The sequence spans 398 residues: Serpin-ZX (398 aa).

Residues 342-366 form an RCL region; sequence GTEAAARTARVVTLRSLPVEPVKVD.

It belongs to the serpin family. As to expression, expressed in roots, coleoptiles, shoots, leaves, embryo and endosperm.

Inhibits chymotrypsin, cathepsin G and trypsin in vitro. The protein is Serpin-ZX (PAZX) of Hordeum vulgare (Barley).